Consider the following 81-residue polypeptide: Protein RALF-like 7 (81 aa).

The signal sequence occupies residues 1 to 29; the sequence is MSARKKNRIHVFFVSIMIIISLVSGFGEG. Intrachain disulfides connect cysteine 46-cysteine 54 and cysteine 66-cysteine 72.

The protein belongs to the plant rapid alkalinization factor (RALF) family.

It localises to the secreted. Cell signaling peptide that may regulate plant stress, growth, and development. Mediates a rapid alkalinization of extracellular space by mediating a transient increase in the cytoplasmic Ca(2+) concentration leading to a calcium-dependent signaling events through a cell surface receptor and a concomitant activation of some intracellular mitogen-activated protein kinases. The chain is Protein RALF-like 7 (RALFL7) from Arabidopsis thaliana (Mouse-ear cress).